Reading from the N-terminus, the 1180-residue chain is RecBCD enzyme subunit RecB (1180 aa).

Positions 2 to 450 (SDVAETLDPL…YTLDTNWRSA (449 aa)) constitute a UvrD-like helicase ATP-binding domain. Positions 2–853 (SDVAETLDPL…KGEPQDAAGL (852 aa)) are ATPase, DNA-binding and helicase activity, interacts with RecC. An ATP-binding site is contributed by 23 to 30 (ASAGTGKT). Residues 252 to 254 (IDR) mediate DNA binding. Trp447 contacts ATP. The region spanning 480–746 (SAGKNQALRF…QIVTIHKSKG (267 aa)) is the UvrD-like helicase C-terminal domain. DNA-binding regions lie at residues 511–512 (VG), 560–561 (SR), and Arg761. Positions 900–1180 (NWRVTSYSGL…MFAGMTLEEA (281 aa)) are nuclease activity, interacts with RecD and RecA. Mg(2+)-binding residues include His956, Asp1067, Asp1080, and Tyr1081. Asp1080 functions as the For nuclease activity in the catalytic mechanism.

It belongs to the helicase family. UvrD subfamily. Heterotrimer of RecB, RecC and RecD. All subunits contribute to DNA-binding. The C-terminus interacts with RecA. Interacts with YgbT (Cas1). In terms of assembly, (Microbial infection) Lambda virus GamS protein interacts with the enzyme without displacing any of the subunits. The cofactor is Mg(2+).

The enzyme catalyses Exonucleolytic cleavage (in the presence of ATP) in either 5'- to 3'- or 3'- to 5'-direction to yield 5'-phosphooligonucleotides.. It catalyses the reaction Couples ATP hydrolysis with the unwinding of duplex DNA by translocating in the 3'-5' direction.. The catalysed reaction is ATP + H2O = ADP + phosphate + H(+). With respect to regulation, after reacting with DNA bearing a Chi site the holoenzyme is disassembled and loses exonuclease activity, DNA unwinding and Chi-directed DNA cleavage; RecB remains complexed with ssDNA, which may prevent holoenzyme reassembly. High levels of Mg(2+) (13 mM MgCl(2+)) or incubation with DNase allows holoenzyme reassembly, suggesting it is DNA bound to RecB that prevents reassembly. (Microbial infection) RecBCD is inhibited by the lambda virus gam protein (both GamL and GamS isoforms); in vitro a short preincubation prior to adding DNA results in maximal inhibition. In terms of biological role, a helicase/nuclease that prepares dsDNA breaks (DSB) for recombinational DNA repair. Binds to DSBs and unwinds DNA via a rapid (&gt;1 kb/second) and highly processive (&gt;30 kb) ATP-dependent bidirectional helicase. Unwinds dsDNA until it encounters a Chi (crossover hotspot instigator, 5'-GCTGGTGG-3') sequence from the 3' direction. Cuts ssDNA a few nucleotides 3' to Chi site, by nicking one strand or switching the strand degraded (depending on the reaction conditions). The properties and activities of the enzyme are changed at Chi. The Chi-altered holoenzyme produces a long 3'-ssDNA overhang which facilitates RecA-binding to the ssDNA for homologous DNA recombination and repair. Holoenzyme degrades any linearized DNA that is unable to undergo homologous recombination. In the holoenzyme this subunit contributes ATPase, 3'-5' helicase, exonuclease activity and loads RecA onto ssDNA. The RecBC complex requires the RecD subunit for nuclease activity, but can translocate along ssDNA in both directions. The RecBCD complex does not unwind G-quadruplex DNA. Probably interacts with a component of retron Ec48 which moniters RecBCD stability; when RecB is missing or impaired the retron is activated and becomes toxic. The chain is RecBCD enzyme subunit RecB from Escherichia coli (strain K12).